Consider the following 193-residue polypeptide: Cytidylate kinase (193 aa).

12 to 20 (GLPGSGTTT) contributes to the ATP binding site.

The protein belongs to the cytidylate kinase family. Type 2 subfamily.

Its subcellular location is the cytoplasm. The catalysed reaction is CMP + ATP = CDP + ADP. It carries out the reaction dCMP + ATP = dCDP + ADP. This is Cytidylate kinase from Methanopyrus kandleri (strain AV19 / DSM 6324 / JCM 9639 / NBRC 100938).